A 257-amino-acid chain; its full sequence is 3-methyl-2-oxobutanoate hydroxymethyltransferase (257 aa).

Residues aspartate 42 and aspartate 86 each contribute to the Mg(2+) site. 3-methyl-2-oxobutanoate is bound by residues 42–43, aspartate 86, and lysine 116; that span reads DS. Glutamate 118 provides a ligand contact to Mg(2+). The active-site Proton acceptor is the glutamate 185.

It belongs to the PanB family. As to quaternary structure, homodecamer; pentamer of dimers. Requires Mg(2+) as cofactor.

It localises to the cytoplasm. It carries out the reaction 3-methyl-2-oxobutanoate + (6R)-5,10-methylene-5,6,7,8-tetrahydrofolate + H2O = 2-dehydropantoate + (6S)-5,6,7,8-tetrahydrofolate. Its pathway is cofactor biosynthesis; (R)-pantothenate biosynthesis; (R)-pantoate from 3-methyl-2-oxobutanoate: step 1/2. Functionally, catalyzes the reversible reaction in which hydroxymethyl group from 5,10-methylenetetrahydrofolate is transferred onto alpha-ketoisovalerate to form ketopantoate. The protein is 3-methyl-2-oxobutanoate hydroxymethyltransferase of Prochlorococcus marinus subsp. pastoris (strain CCMP1986 / NIES-2087 / MED4).